The chain runs to 458 residues: Adenylosuccinate synthetase (458 aa).

GTP contacts are provided by residues 17–23 (GDEGKGK) and 45–47 (GHT). Residue aspartate 18 is the Proton acceptor of the active site. 2 residues coordinate Mg(2+): aspartate 18 and glycine 45. IMP contacts are provided by residues 18-21 (DEGK), 43-46 (NAGH), threonine 137, arginine 151, glutamine 247, threonine 262, and arginine 330. Histidine 46 functions as the Proton donor in the catalytic mechanism. 326–332 (VTTGRSR) lines the substrate pocket. Residues arginine 332, 358-360 (KLD), and 440-442 (STS) contribute to the GTP site.

This sequence belongs to the adenylosuccinate synthetase family. Homodimer. Requires Mg(2+) as cofactor.

The protein localises to the cytoplasm. The enzyme catalyses IMP + L-aspartate + GTP = N(6)-(1,2-dicarboxyethyl)-AMP + GDP + phosphate + 2 H(+). It participates in purine metabolism; AMP biosynthesis via de novo pathway; AMP from IMP: step 1/2. In terms of biological role, plays an important role in the de novo pathway of purine nucleotide biosynthesis. Catalyzes the first committed step in the biosynthesis of AMP from IMP. This chain is Adenylosuccinate synthetase, found in Acidovorax sp. (strain JS42).